A 195-amino-acid chain; its full sequence is Small ribosomal subunit protein uS5 (195 aa).

The tract at residues 1-20 (MAREREGGGRGRREDREERD) is disordered. Residues 23-86 (FVDKLVHINR…EAAKRGLIRV (64 aa)) enclose the S5 DRBM domain. The tract at residues 161 to 195 (DSPRSVAARRGIKVSTLQSRRRDADPADQSEAAVA) is disordered.

Belongs to the universal ribosomal protein uS5 family. In terms of assembly, part of the 30S ribosomal subunit. Contacts proteins S4 and S8.

In terms of biological role, with S4 and S12 plays an important role in translational accuracy. Functionally, located at the back of the 30S subunit body where it stabilizes the conformation of the head with respect to the body. In Methylobacterium radiotolerans (strain ATCC 27329 / DSM 1819 / JCM 2831 / NBRC 15690 / NCIMB 10815 / 0-1), this protein is Small ribosomal subunit protein uS5.